We begin with the raw amino-acid sequence, 216 residues long: Inactive ribonuclease-like protein 10 (216 aa).

An N-terminal signal peptide occupies residues 1–26 (MKLNLVQIFFMLLMLLLGLGMGLGLG). A disordered region spans residues 43 to 65 (EFWSSDSQDKAEATEEGDGTQTT).

Belongs to the pancreatic ribonuclease family. Post-translationally, the N-terminus is blocked. Glycosylated.

The protein resides in the secreted. In terms of biological role, secreted proximal epididymal protein required for post-testicular sperm maturation and male fertility. May be involved in sperm adhesion to the egg zona pellucida. Does not have ribonuclease activity. The sequence is that of Inactive ribonuclease-like protein 10 (RNASE10) from Homo sapiens (Human).